The sequence spans 793 residues: Endonuclease MutS2 (793 aa).

329 to 336 lines the ATP pocket; it reads GPNTGGKT. The tract at residues 611 to 639 is disordered; sequence LARARQAVEPTEEEQRARRRGEVPRGLKP. The segment covering 623–639 has biased composition (basic and acidic residues); that stretch reads EEQRARRRGEVPRGLKP. In terms of domain architecture, Smr spans 717–792; it reads VDLRGLMVEE…GDGVTVAKLR (76 aa).

The protein belongs to the DNA mismatch repair MutS family. MutS2 subfamily. In terms of assembly, homodimer. Binds to stalled ribosomes, contacting rRNA.

Functionally, endonuclease that is involved in the suppression of homologous recombination and thus may have a key role in the control of bacterial genetic diversity. Its function is as follows. Acts as a ribosome collision sensor, splitting the ribosome into its 2 subunits. Detects stalled/collided 70S ribosomes which it binds and splits by an ATP-hydrolysis driven conformational change. Acts upstream of the ribosome quality control system (RQC), a ribosome-associated complex that mediates the extraction of incompletely synthesized nascent chains from stalled ribosomes and their subsequent degradation. Probably generates substrates for RQC. The chain is Endonuclease MutS2 from Symbiobacterium thermophilum (strain DSM 24528 / JCM 14929 / IAM 14863 / T).